We begin with the raw amino-acid sequence, 157 residues long: 2-C-methyl-D-erythritol 2,4-cyclodiphosphate synthase (157 aa).

Aspartate 8 and histidine 10 together coordinate a divalent metal cation. 4-CDP-2-C-methyl-D-erythritol 2-phosphate contacts are provided by residues 8–10 and 34–35; these read DVH and HS. Histidine 42 is a binding site for a divalent metal cation. Residues 56–58, 61–65, 100–106, 132–135, phenylalanine 139, and arginine 142 contribute to the 4-CDP-2-C-methyl-D-erythritol 2-phosphate site; these read DIG, FPDTD, AQAPKMA, and TTTE.

Belongs to the IspF family. In terms of assembly, homotrimer. Requires a divalent metal cation as cofactor.

It catalyses the reaction 4-CDP-2-C-methyl-D-erythritol 2-phosphate = 2-C-methyl-D-erythritol 2,4-cyclic diphosphate + CMP. It participates in isoprenoid biosynthesis; isopentenyl diphosphate biosynthesis via DXP pathway; isopentenyl diphosphate from 1-deoxy-D-xylulose 5-phosphate: step 4/6. Its function is as follows. Involved in the biosynthesis of isopentenyl diphosphate (IPP) and dimethylallyl diphosphate (DMAPP), two major building blocks of isoprenoid compounds. Catalyzes the conversion of 4-diphosphocytidyl-2-C-methyl-D-erythritol 2-phosphate (CDP-ME2P) to 2-C-methyl-D-erythritol 2,4-cyclodiphosphate (ME-CPP) with a corresponding release of cytidine 5-monophosphate (CMP). This chain is 2-C-methyl-D-erythritol 2,4-cyclodiphosphate synthase, found in Pseudomonas fluorescens (strain SBW25).